We begin with the raw amino-acid sequence, 260 residues long: UPF0246 protein Tola_0968 (260 aa).

It belongs to the UPF0246 family.

This Tolumonas auensis (strain DSM 9187 / NBRC 110442 / TA 4) protein is UPF0246 protein Tola_0968.